A 504-amino-acid polypeptide reads, in one-letter code: Amphoterin-induced protein 3 (504 aa).

Residues 1–19 (MTWLVLLGTLLCMLRVGLG) form the signal peptide. At 20–383 (TPDSEGFPPR…PRPEPEAFNT (364 aa)) the chain is on the extracellular side. An LRRNT domain is found at 25-61 (GFPPRALHNCPYKCICAADLLSCTGLGLQDVPAELPA). 2 cysteine pairs are disulfide-bonded: C34–C40 and C38–C47. LRR repeat units lie at residues 62–83 (ATADLDLSHNALQRLRPGWLAP), 86–107 (QLRALHLDHNELDALGRGVFVN), 110–133 (GLRLLDLSSNTLRALGRHDLDGLG), 134–155 (ALEKLLLFNNRLVHLDEHAFHG), 158–178 (ALSHLYLGCNELASFSFDHLH), and 184–207 (HLLTLDLSSNRLGHISVPELAALP). N107 carries N-linked (GlcNAc...) asparagine glycosylation. One can recognise an LRRCT domain in the interval 219-275 (NPLPCDCRLYHLLQRWHQRGLSAVRDFAREYVCLAFKVPASRVRFFQHSRVFENCSS). 3 disulfides stabilise this stretch: C223/C251, C225/C273, and C300/C352. N-linked (GlcNAc...) asparagine glycans are attached at residues N272, N301, N362, and N368. The region spanning 277–370 (PALGLERPEE…HNQTHEYNVS (94 aa)) is the Ig-like C2-type domain. Residues 384-404 (GFTTLLGCAVGLVLVLLYLFA) traverse the membrane as a helical segment. Residues 405–504 (PPCRCCRRAC…SIGSEGPMTT (100 aa)) lie on the Cytoplasmic side of the membrane. A disordered region spans residues 422–448 (TPSPLQELSAQSSVLSTTPPDAPSRKA). Over residues 424 to 440 (SPLQELSAQSSVLSTTP) the composition is skewed to polar residues.

Belongs to the immunoglobulin superfamily. AMIGO family. As to quaternary structure, binds AMIGO1 or AMIGO2.

Its subcellular location is the membrane. In terms of biological role, may mediate heterophilic cell-cell interaction. May contribute to signal transduction through its intracellular domain. The polypeptide is Amphoterin-induced protein 3 (Homo sapiens (Human)).